The chain runs to 459 residues: 3-carboxy-cis,cis-muconate cycloisomerase (459 aa).

It belongs to the class-II fumarase/aspartase family. In terms of assembly, homotetramer.

The protein localises to the cytoplasm. The catalysed reaction is 2-(carboxymethyl)-5-oxo-2,5-dihydro-2-furoate = 3-carboxy-cis,cis-muconate + H(+). The protein operates within aromatic compound metabolism; beta-ketoadipate pathway; 5-oxo-4,5-dihydro-2-furylacetate from 3-carboxy-cis,cis-muconate: step 1/2. In terms of biological role, catalyzes an anti cycloisomerization. This Pseudomonas aeruginosa (strain ATCC 15692 / DSM 22644 / CIP 104116 / JCM 14847 / LMG 12228 / 1C / PRS 101 / PAO1) protein is 3-carboxy-cis,cis-muconate cycloisomerase (pcaB).